The primary structure comprises 468 residues: UDP-N-acetylmuramate--L-alanine ligase (468 aa).

112–118 (GTHGKTT) is an ATP binding site.

The protein belongs to the MurCDEF family.

The protein localises to the cytoplasm. The catalysed reaction is UDP-N-acetyl-alpha-D-muramate + L-alanine + ATP = UDP-N-acetyl-alpha-D-muramoyl-L-alanine + ADP + phosphate + H(+). The protein operates within cell wall biogenesis; peptidoglycan biosynthesis. Cell wall formation. This is UDP-N-acetylmuramate--L-alanine ligase from Bordetella bronchiseptica (strain ATCC BAA-588 / NCTC 13252 / RB50) (Alcaligenes bronchisepticus).